The sequence spans 92 residues: Exodeoxyribonuclease 7 small subunit (92 aa).

Over residues 71-84 (AESAGTAKSAVAAD) the composition is skewed to low complexity. A disordered region spans residues 71–92 (AESAGTAKSAVAADSRGAADSA).

The protein belongs to the XseB family. Heterooligomer composed of large and small subunits.

It localises to the cytoplasm. The catalysed reaction is Exonucleolytic cleavage in either 5'- to 3'- or 3'- to 5'-direction to yield nucleoside 5'-phosphates.. In terms of biological role, bidirectionally degrades single-stranded DNA into large acid-insoluble oligonucleotides, which are then degraded further into small acid-soluble oligonucleotides. The chain is Exodeoxyribonuclease 7 small subunit from Leifsonia xyli subsp. xyli (strain CTCB07).